Here is a 283-residue protein sequence, read N- to C-terminus: 4-diphosphocytidyl-2-C-methyl-D-erythritol kinase (283 aa).

K10 is an active-site residue. ATP is bound at residue 99 to 109 (PMGGGLGGGSS). D141 is a catalytic residue.

It belongs to the GHMP kinase family. IspE subfamily. As to quaternary structure, homodimer.

The enzyme catalyses 4-CDP-2-C-methyl-D-erythritol + ATP = 4-CDP-2-C-methyl-D-erythritol 2-phosphate + ADP + H(+). Its pathway is isoprenoid biosynthesis; isopentenyl diphosphate biosynthesis via DXP pathway; isopentenyl diphosphate from 1-deoxy-D-xylulose 5-phosphate: step 3/6. Functionally, catalyzes the phosphorylation of the position 2 hydroxy group of 4-diphosphocytidyl-2C-methyl-D-erythritol. This chain is 4-diphosphocytidyl-2-C-methyl-D-erythritol kinase, found in Shigella boydii serotype 18 (strain CDC 3083-94 / BS512).